A 69-amino-acid polypeptide reads, in one-letter code: Small, acid-soluble spore protein C4 (69 aa).

This sequence belongs to the alpha/beta-type SASP family.

Functionally, SASP are bound to spore DNA. They are double-stranded DNA-binding proteins that cause DNA to change to an a-like conformation. They protect the DNA backbone from chemical and enzymatic cleavage and are thus involved in dormant spore's high resistance to UV light. The protein is Small, acid-soluble spore protein C4 (SASP-C4) of Priestia megaterium (Bacillus megaterium).